Consider the following 375-residue polypeptide: 23S rRNA (uracil(747)-C(5))-methyltransferase RlmC (375 aa).

[4Fe-4S] cluster contacts are provided by cysteine 3, cysteine 11, cysteine 14, and cysteine 87. Positions 212, 241, 262, and 307 each coordinate S-adenosyl-L-methionine. Residue cysteine 334 is the Nucleophile of the active site.

It belongs to the class I-like SAM-binding methyltransferase superfamily. RNA M5U methyltransferase family. RlmC subfamily.

It carries out the reaction uridine(747) in 23S rRNA + S-adenosyl-L-methionine = 5-methyluridine(747) in 23S rRNA + S-adenosyl-L-homocysteine + H(+). Functionally, catalyzes the formation of 5-methyl-uridine at position 747 (m5U747) in 23S rRNA. The chain is 23S rRNA (uracil(747)-C(5))-methyltransferase RlmC from Salmonella agona (strain SL483).